A 505-amino-acid polypeptide reads, in one-letter code: DEAD-box ATP-dependent RNA helicase 41 (505 aa).

Residues 27 to 56 (GEPKCVICSRYGEYICDETNDDVCSLECKQ) form an HIT-type zinc finger. The Q motif signature appears at 110–138 (LTFTSCGLPPKLLLNLETAGYDFPTPIQM). The 178-residue stretch at 141–318 (IPAALTGKSL…GSLAKEIILV (178 aa)) folds into the Helicase ATP-binding domain. 154–161 (ADTGSGKT) serves as a coordination point for ATP. The short motif at 267–270 (DEVD) is the DEAD box element. The Helicase C-terminal domain occupies 342–492 (KKQKLFDILR…AIPKELINLT (151 aa)).

It belongs to the DEAD box helicase family. DDX59 subfamily.

The catalysed reaction is ATP + H2O = ADP + phosphate + H(+). The polypeptide is DEAD-box ATP-dependent RNA helicase 41 (RH41) (Arabidopsis thaliana (Mouse-ear cress)).